The sequence spans 87 residues: Small ribosomal subunit protein bS20 (87 aa).

The segment at 1–22 (MANIKSQIKRNKTNEKARLRNQ) is disordered.

The protein belongs to the bacterial ribosomal protein bS20 family.

Its function is as follows. Binds directly to 16S ribosomal RNA. The protein is Small ribosomal subunit protein bS20 of Corynebacterium glutamicum (strain R).